The sequence spans 147 residues: Hemoglobin subunit gamma-2 (147 aa).

Positions 3 to 147 constitute a Globin domain; the sequence is HFTEEDKATI…VASALSSRYH (145 aa). Threonine 13 bears the Phosphothreonine mark. 3 positions are modified to phosphoserine: serine 45, serine 51, and serine 53. An N6-acetyllysine modification is found at lysine 60. Residue histidine 64 participates in heme b binding. N6-acetyllysine is present on lysine 83. Residue histidine 93 coordinates heme b. Residue cysteine 94 is modified to S-nitrosocysteine. Phosphoserine occurs at positions 140, 143, and 144.

It belongs to the globin family. Heterotetramer of two alpha chains and two gamma chains in fetal hemoglobin (Hb F). In terms of tissue distribution, red blood cells.

Functionally, gamma chains make up the fetal hemoglobin F, in combination with alpha chains. The sequence is that of Hemoglobin subunit gamma-2 (HBG2) from Hylobates lar (Lar gibbon).